The sequence spans 100 residues: Cystatin-B (100 aa).

A Cystatin domain is found at 6–88 (GGISAPLDAD…GGGLELSGMQ (83 aa)). The Secondary area of contact signature appears at 48-52 (QIVSG).

The protein belongs to the cystatin family. In terms of tissue distribution, widely expressed. Highly expressed in liver and to a lesser extent in spleen, gill, brain, intestine, kidney, head kidney and blood. Lowest level in muscle.

The protein resides in the cytoplasm. Functionally, thiol protease inhibitor. Has papain inhibitory activity in vitro. May be involved in immune responses against invading Gram-negative bacteria. This is Cystatin-B from Oplegnathus fasciatus (Barred knifejaw).